Reading from the N-terminus, the 754-residue chain is Nibrin (754 aa).

In terms of domain architecture, FHA spans 24–83; sequence YVVGRKNCAILIEKDQSISRNHAVLTANFSVTNLSQTDEIPVLALKDNSKYGTFVNEEKM. 2 BRCT domains span residues 105–181 and 224–315; these read KFRI…TEFL and GKTF…LAVI. The tract at residues 111–328 is mediates interaction with SP100; it reads EPLVACSSCL…TKNYCDPQGH (218 aa). Positions 221 to 402 are interaction with MTOR, MAPKAP1 and RICTOR; the sequence is IFKGKTFIFL…FRMLSQDAPT (182 aa). Ser278 carries the phosphoserine; by ATM modification. The tract at residues 326 to 346 is disordered; it reads QGHPSTGLKTTTPGPSLSQGL. Residues 328–346 show a composition bias toward polar residues; the sequence is HPSTGLKTTTPGPSLSQGL. Residue Thr337 is modified to Phosphothreonine. Ser343 carries the phosphoserine; by ATM modification. The residue at position 347 (Ser347) is a Phosphoserine. At Lys388 the chain carries N6-lactoyllysine. 2 disordered regions span residues 396–415 and 431–475; these read LSQD…NNNS and LSPT…NQEM. Ser397 is subject to Phosphoserine. Thr402 bears the Phosphothreonine mark. Composition is skewed to polar residues over residues 431–440 and 447–462; these read LSPTKLPSIN and SQQQ…FQPS. Position 432 is a phosphoserine (Ser432). Lys435 is covalently cross-linked (Glycyl lysine isopeptide (Lys-Gly) (interchain with G-Cter in ubiquitin)). The short motif at 461–467 is the Nuclear localization signal element; that stretch reads PSTKKRE. A phosphoserine mark is found at Ser509 and Ser518. Glycyl lysine isopeptide (Lys-Gly) (interchain with G-Cter in SUMO2) cross-links involve residues Lys571 and Lys582. Residues Ser615 and Ser673 each carry the phosphoserine modification. Residues Lys686, Lys690, and Lys735 each participate in a glycyl lysine isopeptide (Lys-Gly) (interchain with G-Cter in ubiquitin) cross-link. A FxF/Y motif motif is present at residues 740–749; that stretch reads ADDLFRYNPY.

The protein belongs to the Nibrin family. As to quaternary structure, component of the MRN complex composed of two heterodimers RAD50 and MRE11 associated with a single NBN. The MRN complexes dimerize on DNA to form joined MRN-MRN oligomers required for DNA double-strand break repair. The MRN complexes dimerize on DNA to form joined MRN-MRN oligomers required for DNA double-strand break repair. As part of the MRN complex, interacts with MCM9; the interaction recruits the complex to DNA repair sites. Component of the BASC complex, at least composed of BRCA1, MSH2, MSH6, MLH1, ATM, BLM, RAD50, MRE11 and NBN. Interacts with histone H2AX; this requires phosphorylation of H2AX on 'Ser-139' and promotes NBN recruitment to DNA damage sites. Interacts with (phosphorylated) MDC1; promoting NBN recruitment to DNA damage sites. Interacts with (phosphorylated) RAD17; promoting NBN recruitment to DNA damage sites. Interacts (via FxF/Y motif) with ATM. Interacts with HJURP. Interacts with INTS3. Interacts with KPNA2. Interacts with TERF2; interaction is disrupted upon NBN phosphorylation by CDK2. Interacts with (phosphorylated) RBBP8/CtIP; the interaction links the role of the MRN complex in DNA double-strand break sensing to resection. Interacts with SP100; recruits NBN to PML bodies. Interacts with ATF2. Interacts with MTOR, MAPKAP1 isoform 2 and RICTOR; indicative for an association with the mTORC2 complex. Interacts with MRNIP. Interacts with UFL1; promoting UFL1 recruitment to double-strand breaks following DNA damage. Interacts with CYREN (via XLF motif). Post-translationally, phosphorylated by ATM in response of ionizing radiation, and such phosphorylation is responsible intra-S phase checkpoint control and telomere maintenance. Phosphorylated at Ser-432 by CDK2 in S/G2 phases abolishes interaction with TERF2, enabling DCLRE1B/Apollo recruitment to telomeres. Phosphorylation at Ser-432 in response to dysfunctional telomeres promotes non-homologous end joining repair at telomeres, while dephosphorylation by PPP1CA promotes microhomology-mediated end-joining (MMEJ) repair. Ubiquitinated at Lys-435 via 'Lys-6'-linked ubiquitin chains by RNF8, promoting NBN recruitment to DNA double-strand breaks (DSBs). Ubiquitinated at Lys-686 and Lys-689 via 'Lys-63'-linked ubiquitin chains by PELI1: ubiquitination takes place following PELI1 phosphorylation and promotes ATM activation and DNA repair. Ubiquitinated at Lys-735 via 'Lys-63'-linked ubiquitin chains by the SCF(SKP2) complex: ubiquitination takes place following SKP2 phosphorylation and promotes ATM activation and DNA repair. In terms of processing, lactylation at Lys-388 by KAT5 in response to DNA damage promotes recruitment of the MRN complex to DNA damage sites. Delactylated by HDAC3.

The protein resides in the nucleus. Its subcellular location is the chromosome. The protein localises to the PML body. It localises to the telomere. Its function is as follows. Component of the MRN complex, which plays a central role in double-strand break (DSB) repair, DNA recombination, maintenance of telomere integrity and meiosis. The MRN complex is involved in the repair of DNA double-strand breaks (DSBs) via homologous recombination (HR), an error-free mechanism which primarily occurs during S and G2 phases. The complex (1) mediates the end resection of damaged DNA, which generates proper single-stranded DNA, a key initial steps in HR, and is (2) required for the recruitment of other repair factors and efficient activation of ATM and ATR upon DNA damage. The MRN complex possesses single-strand endonuclease activity and double-strand-specific 3'-5' exonuclease activity, which are provided by MRE11, to initiate end resection, which is required for single-strand invasion and recombination. Within the MRN complex, NBN acts as a protein-protein adapter, which specifically recognizes and binds phosphorylated proteins, promoting their recruitment to DNA damage sites. Recruits MRE11 and RAD50 components of the MRN complex to DSBs in response to DNA damage. Promotes the recruitment of PI3/PI4-kinase family members ATM, ATR, and probably DNA-PKcs to the DNA damage sites, activating their functions. Mediates the recruitment of phosphorylated RBBP8/CtIP to DSBs, leading to cooperation between the MRN complex and RBBP8/CtIP to initiate end resection. RBBP8/CtIP specifically promotes the endonuclease activity of the MRN complex to clear DNA ends containing protein adducts. The MRN complex is also required for the processing of R-loops. NBN also functions in telomere length maintenance via its interaction with TERF2: interaction with TERF2 during G1 phase preventing recruitment of DCLRE1B/Apollo to telomeres. NBN also promotes DNA repair choice at dysfunctional telomeres: NBN phosphorylation by CK2 promotes non-homologous end joining repair at telomeres, while unphosphorylated NBN promotes microhomology-mediated end-joining (MMEJ) repair. Enhances AKT1 phosphorylation possibly by association with the mTORC2 complex. The protein is Nibrin (NBN) of Pongo abelii (Sumatran orangutan).